Reading from the N-terminus, the 388-residue chain is GTPase Obg (388 aa).

The region spanning 1–159 is the Obg domain; sequence MKFVDEAVIR…RSLKLELLLL (159 aa). Residues 160–333 enclose the OBG-type G domain; sequence ADVGLLGMPN…LAAKLWDFIQ (174 aa). GTP is bound by residues 166–173, 191–195, 213–216, 283–286, and 314–316; these read GMPNAGKS, FTTLV, DIPG, NKAD, and SAY. Ser173 and Thr193 together coordinate Mg(2+).

The protein belongs to the TRAFAC class OBG-HflX-like GTPase superfamily. OBG GTPase family. In terms of assembly, monomer. Mg(2+) serves as cofactor.

It is found in the cytoplasm. Its function is as follows. An essential GTPase which binds GTP, GDP and possibly (p)ppGpp with moderate affinity, with high nucleotide exchange rates and a fairly low GTP hydrolysis rate. Plays a role in control of the cell cycle, stress response, ribosome biogenesis and in those bacteria that undergo differentiation, in morphogenesis control. This Shewanella oneidensis (strain ATCC 700550 / JCM 31522 / CIP 106686 / LMG 19005 / NCIMB 14063 / MR-1) protein is GTPase Obg.